Reading from the N-terminus, the 392-residue chain is ERBB-3 BINDING PROTEIN 1 (392 aa).

2 necessary for nucleolar localization regions span residues 1–50 (MSSD…IVDI) and 298–392 (HLQP…NAQE). An RNA-binding region spans residues 48–56 (VDICEKGDS). Residues 355 to 372 (GIKKKKGGGKKKKAQKAG) form an interaction with RNA region. Residues 357–367 (KKKKGGGKKKK) carry the Nuclear localization signal motif. A compositionally biased stretch (basic residues) spans 358–369 (KKKGGGKKKKAQ). The tract at residues 358 to 392 (KKKGGGKKKKAQKAGEKGEASTEAEPMDASSNAQE) is disordered.

It belongs to the peptidase M24 family. In terms of assembly, component of a ribonucleoprotein complex. Interacts with REIL1 and REIL2. As to expression, strongly expressed in calls, roots and flowers, to a lower extent, in stems and siliques, but hardly detectable in leaves.

The protein localises to the nucleus. Functionally, binds RNA. Associates with 28S, 18S and 5.8S mature rRNAs, several rRNA precursors and probably U3 small nucleolar RNA. May be involved in regulation of intermediate and late steps of rRNA processing. May be involved in ribosome assembly. Required for expression of cell cycle genes such as CYCD3-1, RNR2A and CDKB1-1. Promotes, in a dose- and auxin-dependent manner, organ growth by stimulating both cell proliferation and expansion, via the regulation of RBR1 levels. The chain is ERBB-3 BINDING PROTEIN 1 from Arabidopsis thaliana (Mouse-ear cress).